The following is a 127-amino-acid chain: Protein ApaG (127 aa).

An ApaG domain is found at 3 to 127 (KTSIPDFQIT…FYLIAPLALH (125 aa)).

In Bdellovibrio bacteriovorus (strain ATCC 15356 / DSM 50701 / NCIMB 9529 / HD100), this protein is Protein ApaG.